Here is a 511-residue protein sequence, read N- to C-terminus: Sorting nexin MVP1 (511 aa).

The segment at 1-36 (MDNYEGSDPWNTSSNAWTKDDDHVVSTTNSEPSLNG) is disordered. A compositionally biased stretch (polar residues) spans 25–36 (VSTTNSEPSLNG). The PX domain maps to 128 to 247 (DADIIIIEEI…TFLTVRTDLT (120 aa)). A 1,2-diacyl-sn-glycero-3-phospho-(1D-myo-inositol-3-phosphate) is bound by residues Arg-172, Ser-174, Lys-198, and Arg-213.

Belongs to the sorting nexin family. In terms of assembly, homodimer. Forms an autoinhibited tetramer consisting of 2 homodimers that self-interact, wherein the membrane-interacting BAR surfaces are sequestered and the PX lipid-binding sites are occluded. Interacts with VPS1.

The protein localises to the cytoplasm. The protein resides in the endosome membrane. Required for vacuolar protein sorting. Component of the retromer-mediated endosome-to-Golgi retrograde pathway. Required for efficient cargo export from the endosome, promoting VPS1-mediated fission of retromer-coated tubules that bud from the endosome. This Saccharomyces cerevisiae (strain ATCC 204508 / S288c) (Baker's yeast) protein is Sorting nexin MVP1 (MVP1).